We begin with the raw amino-acid sequence, 254 residues long: Leucyl/phenylalanyl-tRNA--protein transferase (254 aa).

This sequence belongs to the L/F-transferase family.

Its subcellular location is the cytoplasm. The enzyme catalyses N-terminal L-lysyl-[protein] + L-leucyl-tRNA(Leu) = N-terminal L-leucyl-L-lysyl-[protein] + tRNA(Leu) + H(+). It carries out the reaction N-terminal L-arginyl-[protein] + L-leucyl-tRNA(Leu) = N-terminal L-leucyl-L-arginyl-[protein] + tRNA(Leu) + H(+). The catalysed reaction is L-phenylalanyl-tRNA(Phe) + an N-terminal L-alpha-aminoacyl-[protein] = an N-terminal L-phenylalanyl-L-alpha-aminoacyl-[protein] + tRNA(Phe). Functionally, functions in the N-end rule pathway of protein degradation where it conjugates Leu, Phe and, less efficiently, Met from aminoacyl-tRNAs to the N-termini of proteins containing an N-terminal arginine or lysine. In Burkholderia multivorans (strain ATCC 17616 / 249), this protein is Leucyl/phenylalanyl-tRNA--protein transferase.